Reading from the N-terminus, the 327-residue chain is Annexin A8 (327 aa).

Annexin repeat units follow at residues 21 to 92, 93 to 164, 177 to 249, and 253 to 324; these read FNPD…ALMY, PPYR…CLLQ, GLAL…TVVK, and NVHS…NLVG. 4 residues coordinate Ca(2+): M266, G268, G270, and D310.

It belongs to the annexin family.

This protein is an anticoagulant protein that acts as an indirect inhibitor of the thromboplastin-specific complex, which is involved in the blood coagulation cascade. This Rattus norvegicus (Rat) protein is Annexin A8 (Anxa8).